The sequence spans 184 residues: Two-component response regulator ARR5 (184 aa).

One can recognise a Response regulatory domain in the interval 26–154 (HVLAVDDSMV…DVKRLRDSLM (129 aa)). Aspartate 87 is modified (4-aspartylphosphate).

This sequence belongs to the ARR family. Type-A subfamily. In terms of processing, two-component system major event consists of a His-to-Asp phosphorelay between a sensor histidine kinase (HK) and a response regulator (RR). In plants, the His-to-Asp phosphorelay involves an additional intermediate named Histidine-containing phosphotransfer protein (HPt). This multistep phosphorelay consists of a His-Asp-His-Asp sequential transfer of a phosphate group between first a His and an Asp of the HK protein, followed by the transfer to a conserved His of the HPt protein and finally the transfer to an Asp in the receiver domain of the RR protein. As to expression, predominantly expressed in roots and shoot apical meristems.

Its subcellular location is the nucleus. In terms of biological role, functions as a response regulator involved in His-to-Asp phosphorelay signal transduction system. Phosphorylation of the Asp residue in the receiver domain activates the ability of the protein to promote the transcription of target genes. Type-A response regulators seem to act as negative regulators of the cytokinin signaling. The sequence is that of Two-component response regulator ARR5 (ARR5) from Arabidopsis thaliana (Mouse-ear cress).